The following is a 270-amino-acid chain: Phosphoribosylformylglycinamidine synthase subunit PurQ (270 aa).

The 247-residue stretch at 5 to 251 folds into the Glutamine amidotransferase type-1 domain; that stretch reads ALVLHATGTN…VIRERDSEEE (247 aa). C95 acts as the Nucleophile in catalysis. Active-site residues include H236 and E238.

As to quaternary structure, part of the FGAM synthase complex composed of 1 PurL, 1 PurQ and 2 PurS subunits.

It localises to the cytoplasm. The catalysed reaction is N(2)-formyl-N(1)-(5-phospho-beta-D-ribosyl)glycinamide + L-glutamine + ATP + H2O = 2-formamido-N(1)-(5-O-phospho-beta-D-ribosyl)acetamidine + L-glutamate + ADP + phosphate + H(+). The enzyme catalyses L-glutamine + H2O = L-glutamate + NH4(+). Its pathway is purine metabolism; IMP biosynthesis via de novo pathway; 5-amino-1-(5-phospho-D-ribosyl)imidazole from N(2)-formyl-N(1)-(5-phospho-D-ribosyl)glycinamide: step 1/2. Its function is as follows. Part of the phosphoribosylformylglycinamidine synthase complex involved in the purines biosynthetic pathway. Catalyzes the ATP-dependent conversion of formylglycinamide ribonucleotide (FGAR) and glutamine to yield formylglycinamidine ribonucleotide (FGAM) and glutamate. The FGAM synthase complex is composed of three subunits. PurQ produces an ammonia molecule by converting glutamine to glutamate. PurL transfers the ammonia molecule to FGAR to form FGAM in an ATP-dependent manner. PurS interacts with PurQ and PurL and is thought to assist in the transfer of the ammonia molecule from PurQ to PurL. The protein is Phosphoribosylformylglycinamidine synthase subunit PurQ of Treponema denticola (strain ATCC 35405 / DSM 14222 / CIP 103919 / JCM 8153 / KCTC 15104).